Consider the following 276-residue polypeptide: 3-keto-5-aminohexanoate cleavage enzyme (276 aa).

Residue E14 participates in (5S)-5-amino-3-oxohexanoate binding. 2 residues coordinate Zn(2+): H46 and H48. (5S)-5-amino-3-oxohexanoate-binding residues include S82, G85, T106, and N108. E230 provides a ligand contact to Zn(2+).

This sequence belongs to the BKACE family. Kce subfamily. As to quaternary structure, homotetramer. Zn(2+) serves as cofactor.

It catalyses the reaction (5S)-5-amino-3-oxohexanoate + acetyl-CoA = (3S)-3-aminobutanoyl-CoA + acetoacetate. The protein operates within amino-acid degradation; L-lysine degradation via acetate pathway. Its function is as follows. Involved in the anaerobic fermentation of lysine. Catalyzes the reversible reaction between 3-keto-5-aminohexanoate (KAH) and acetyl-CoA to form 3-aminobutyryl-CoA and acetoacetate. The reaction involves the deprotonation of KAH, the nucleophilic addition onto acetyl-CoA and the intramolecular transfer of the CoA moiety. The protein is 3-keto-5-aminohexanoate cleavage enzyme of Cloacimonas acidaminovorans (strain Evry).